The sequence spans 84 residues: Sec-independent protein translocase protein TatA (84 aa).

Residues 4–24 (MSPVHWLILAVVLLVVFGGGG) form a helical membrane-spanning segment. The interval 46 to 84 (DDESMTATDATQAPGHISPPNQNPGYSQTTSSETHRNQV) is disordered. Residues 64–77 (PPNQNPGYSQTTSS) show a composition bias toward polar residues.

Belongs to the TatA/E family. The Tat system comprises two distinct complexes: a TatABC complex, containing multiple copies of TatA, TatB and TatC subunits, and a separate TatA complex, containing only TatA subunits. Substrates initially bind to the TatABC complex, which probably triggers association of the separate TatA complex to form the active translocon.

It localises to the cell inner membrane. Its function is as follows. Part of the twin-arginine translocation (Tat) system that transports large folded proteins containing a characteristic twin-arginine motif in their signal peptide across membranes. TatA could form the protein-conducting channel of the Tat system. The protein is Sec-independent protein translocase protein TatA of Gluconobacter oxydans (strain 621H) (Gluconobacter suboxydans).